The following is a 944-amino-acid chain: Leucine--tRNA ligase (944 aa).

The short motif at 40 to 51 (PYPSGAGLHVGH) is the 'HIGH' region element. The 'KMSKS' region motif lies at 718–722 (KMSKS). K721 lines the ATP pocket.

It belongs to the class-I aminoacyl-tRNA synthetase family.

Its subcellular location is the cytoplasm. It carries out the reaction tRNA(Leu) + L-leucine + ATP = L-leucyl-tRNA(Leu) + AMP + diphosphate. The sequence is that of Leucine--tRNA ligase from Bacteroides thetaiotaomicron (strain ATCC 29148 / DSM 2079 / JCM 5827 / CCUG 10774 / NCTC 10582 / VPI-5482 / E50).